We begin with the raw amino-acid sequence, 83 residues long: Cytochrome b559 subunit alpha (83 aa).

Residues valine 21–tryptophan 35 form a helical membrane-spanning segment. Histidine 23 contacts heme.

It belongs to the PsbE/PsbF family. As to quaternary structure, heterodimer of an alpha subunit and a beta subunit. PSII is composed of 1 copy each of membrane proteins PsbA, PsbB, PsbC, PsbD, PsbE, PsbF, PsbH, PsbI, PsbJ, PsbK, PsbL, PsbM, PsbT, PsbX, PsbY, PsbZ, Psb30/Ycf12, at least 3 peripheral proteins of the oxygen-evolving complex and a large number of cofactors. It forms dimeric complexes. Heme b is required as a cofactor.

It localises to the plastid. It is found in the chloroplast thylakoid membrane. This b-type cytochrome is tightly associated with the reaction center of photosystem II (PSII). PSII is a light-driven water:plastoquinone oxidoreductase that uses light energy to abstract electrons from H(2)O, generating O(2) and a proton gradient subsequently used for ATP formation. It consists of a core antenna complex that captures photons, and an electron transfer chain that converts photonic excitation into a charge separation. This Mesembryanthemum crystallinum (Common ice plant) protein is Cytochrome b559 subunit alpha.